The following is a 348-amino-acid chain: Sensor protein VraS (348 aa).

2 consecutive transmembrane segments (helical) span residues 13 to 33 (ILVY…VNII) and 43 to 63 (IFGI…CIIV). Residues 150-341 (RLARELHDSV…RIEVKAPLNK (192 aa)) enclose the Histidine kinase domain.

Its subcellular location is the cell membrane. The catalysed reaction is ATP + protein L-histidine = ADP + protein N-phospho-L-histidine.. Its function is as follows. Member of the two-component regulatory system VraS/VraR involved in the control of the cell wall peptidoglycan biosynthesis. Probably activates VraR by phosphorylation. This is Sensor protein VraS (vraS) from Staphylococcus epidermidis (strain ATCC 35984 / DSM 28319 / BCRC 17069 / CCUG 31568 / BM 3577 / RP62A).